The following is a 542-amino-acid chain: Chaperonin GroEL (542 aa).

ATP is bound by residues 29–32 (TMGP), Lys-50, 86–90 (DGTTT), Gly-414, 477–479 (NAA), and Asp-493.

This sequence belongs to the chaperonin (HSP60) family. Forms a cylinder of 14 subunits composed of two heptameric rings stacked back-to-back. Interacts with the co-chaperonin GroES.

It localises to the cytoplasm. It carries out the reaction ATP + H2O + a folded polypeptide = ADP + phosphate + an unfolded polypeptide.. Together with its co-chaperonin GroES, plays an essential role in assisting protein folding. The GroEL-GroES system forms a nano-cage that allows encapsulation of the non-native substrate proteins and provides a physical environment optimized to promote and accelerate protein folding. The protein is Chaperonin GroEL of Sulfurovum sp. (strain NBC37-1).